A 1249-amino-acid polypeptide reads, in one-letter code: Fanconi anemia group J protein (1249 aa).

The Helicase ATP-binding domain occupies 11–442 (GGVKIYFPYK…KDHEPLRAVC (432 aa)). Positions 102 to 127 (QGTSRHFNYPSTPPSERNGTSSTCQD) are enriched in polar residues. A disordered region spans residues 102–131 (QGTSRHFNYPSTPPSERNGTSSTCQDSPEK). The Nuclear localization signal signature appears at 158–175 (KKRIRPLETTQQIRKRHC). ATP is bound at residue 185–192 (AKVDSGKT). [4Fe-4S] cluster is bound by residues Cys-283, Cys-298, Cys-310, and Cys-350. The short motif at 393-396 (DEAH) is the DEAH box element. 7 positions are modified to phosphoserine: Ser-505, Ser-927, Ser-930, Ser-956, Ser-990, Ser-1004, and Ser-1032. The interval 888–1063 (HQKVLNVSIK…ESSNLTVNTS (176 aa)) is interaction with BRCA1. Disordered regions lie at residues 1018–1042 (KATP…EKME) and 1108–1127 (VSEE…EAED). A compositionally biased stretch (polar residues) spans 1023-1032 (LGSSENSASS). Basic and acidic residues predominate over residues 1110–1122 (EEDKQSTSNRDFE). Position 1237 is a phosphoserine (Ser-1237). Lys-1249 is modified (N6-acetyllysine).

This sequence belongs to the DEAD box helicase family. DEAH subfamily. As to quaternary structure, interacts with the replication protein A complex (RPA) via the RPA1 subunit; following DNA damage they colocalize in foci in the nucleus. Binds directly to the BRCT domains of BRCA1. Interacts with the CIA complex components CIAO1, CIAO2B and MMS19. [4Fe-4S] cluster serves as cofactor. In terms of processing, phosphorylated. Phosphorylation is necessary for interaction with BRCA1, and is cell-cycle regulated. Acetylation at Lys-1249 facilitates DNA end processing required for repair and checkpoint signaling. In terms of tissue distribution, ubiquitously expressed, with highest levels in testis.

Its subcellular location is the nucleus. It localises to the cytoplasm. The catalysed reaction is Couples ATP hydrolysis with the unwinding of duplex DNA at the replication fork by translocating in the 5'-3' direction. This creates two antiparallel DNA single strands (ssDNA). The leading ssDNA polymer is the template for DNA polymerase III holoenzyme which synthesizes a continuous strand.. It catalyses the reaction ATP + H2O = ADP + phosphate + H(+). Helicase activity on forked substrates is stimulated by replication protein A complex heterotrimer (RPA1, RPA2, RPA3). Helicase activity on G-quadruplex DNA is stimulated 3-fold by RPA, and inhibited by MSH2/MSH6. Unwinding of G-quadruplex DNA is inhibited by ATP-gamma-S and telomestatin (TMS); TMA does not inhibit unwinding of forked-duplex DNA. Helicase activity on dsDNA and G-quadruplex DNA is inhibited by porphyrin derivatives meso-tetra (N-methyl-4-pyridyl) porphine tetra tosylate (T4) and N-methyl mesoporphyrin IX (NMM). DNA-dependent ATPase and 5'-3' DNA helicase required for the maintenance of chromosomal stability. Acts late in the Fanconi anemia pathway, after FANCD2 ubiquitination. Involved in the repair of DNA double-strand breaks by homologous recombination in a manner that depends on its association with BRCA1. Involved in the repair of abasic sites at replication forks by promoting the degradation of DNA-protein cross-links: acts by catalyzing unfolding of HMCES DNA-protein cross-link via its helicase activity, exposing the underlying DNA and enabling cleavage of the DNA-protein adduct by the SPRTN metalloprotease. Can unwind RNA:DNA substrates. Unwinds G-quadruplex DNA; unwinding requires a 5'-single stranded tail. In Homo sapiens (Human), this protein is Fanconi anemia group J protein.